The sequence spans 614 residues: Chaperone protein DnaK (614 aa).

The residue at position 175 (threonine 175) is a Phosphothreonine; by autocatalysis. Positions 577-614 (QAGGAEGAADPNAAAGGAQSAPHDDNVVDADFKVDEDK) are disordered. The segment covering 583 to 597 (GAADPNAAAGGAQSA) has biased composition (low complexity). A compositionally biased stretch (basic and acidic residues) spans 598–614 (PHDDNVVDADFKVDEDK).

This sequence belongs to the heat shock protein 70 family.

In terms of biological role, acts as a chaperone. The chain is Chaperone protein DnaK from Clostridium beijerinckii (strain ATCC 51743 / NCIMB 8052) (Clostridium acetobutylicum).